Here is an 85-residue protein sequence, read N- to C-terminus: UPF0291 protein SpyM3_1470 (85 aa).

A disordered region spans residues 62 to 85 (TPEKLRQVQREKGLHGRSLDDPKS).

The protein belongs to the UPF0291 family.

Its subcellular location is the cytoplasm. This is UPF0291 protein SpyM3_1470 from Streptococcus pyogenes serotype M3 (strain ATCC BAA-595 / MGAS315).